A 1142-amino-acid chain; its full sequence is MANRPAASALAGARSPSERQEPREPEVAPPGGDHVFCRKVSGVMVLSSDPPGPAAYRISDSSFVQCGSNCSMIIDGDVARGHLRDLEGATSTGAFVAISNVAAGGDGRTAVVALGGTSGPSATTSVGTQTSGEFLHGNPRTPEPQGPQAVPPPPPPPFPWGHECCARRDARGGAEKDVGAAESWSDGPSSDSETEDSDSSDEDTGSETLSRSSSIWAAGATDDDDSDSDSRSDDSVQPDVVVRRRWSDGPAPVAFPKPRRPGDSPGNPGLGAGTGPGSATDPRASADSDSAAHAAAPQADVAPVLDSQPTVGTDPGYPVPLELTPENAEAVARFLGDAVDREPALMLEYFCRCAREESKRVPPRTFGSAPRLTEDDFGLLNYALAEMRRLCLDLPPVPPNAYTPYHLREYATRLVNGFKPLVRRSARLYRILGVLVHLRIRTREASFEEWMRSKEVDLDFGLTERLREHEAQLMILAQALNPYDCLIHSTPNTLVERGLQSALKYEEFYLKRFGGHYMESVFQMYTRIAGFLACRATRGMRHIALGRQGSWWEMFKFFFHRLYDHQIVPSTPAMLNLGTRNYYTSSCYLVNPQATTNQATLRAITGNVSAILARNGGIGLCMQAFNDASPGTASIMPALKVLDSLVAAHNKQSTRPTGACVYLEPWHSDVRAVLRMKGVLAGEEAQRCDNIFSALWMPDLFFKRLIRHLDGEKNVTWSLFDRDTSMSLADFHGEEFEKLYEHLEAMGFGETIPIQDLAYAIVRSAATTGSPFIMFKDAVNRHYIYDTQGAAIAGSNLCTEIVHPASKRSSGVCNLGSVNLARCVSRQTFDFGRLRDAVQACVLMVNIMIDSTLQPTPQCTRGNDNLRSMGIGMQGLHTACLKMGLDLESAEFRDLNTHIAEVMLLAAMKTSNALCVRGARPFSHFKRSMYRAGRFHWERFSNASPRYEGEWEMLRQSMMKHGLRNSQFIALMPTAASAQISDVSEGFAPLFTNLFSKVTRDGETLRPNTLLLKELERTFGGKRLLDAMDGLEAKQWSVAQALPCLDPAHPLRRFKTAFDYDQELLIDLCADRAPYVDHSQSMTLYVTEKADGTLPASTLVRLLVHAYKRGLKTGMYYCKVRKATNSGVFAGDDNIVCTSCAL.

The tract at residues 1–33 is disordered; it reads MANRPAASALAGARSPSERQEPREPEVAPPGGD. The span at 16 to 26 shows a compositional bias: basic and acidic residues; it reads PSERQEPREPE. Residues 55-75 carry the RIP homotypic interaction motif (RHIM) motif; the sequence is AYRISDSSFVQCGSNCSMIID. Positions 118–322 are disordered; sequence SGPSATTSVG…TDPGYPVPLE (205 aa). Over residues 119 to 132 the composition is skewed to polar residues; the sequence is GPSATTSVGTQTSG. Over residues 141–159 the composition is skewed to pro residues; that stretch reads TPEPQGPQAVPPPPPPPFP. Positions 164–179 are enriched in basic and acidic residues; the sequence is CCARRDARGGAEKDVG. Acidic residues predominate over residues 192 to 205; it reads SETEDSDSSDEDTG. Low complexity predominate over residues 277-303; sequence GSATDPRASADSDSAAHAAAPQADVAP. The tract at residues 294–400 is alpha-crystallin domain; it reads AAAPQADVAP…CLDLPPVPPN (107 aa). Substrate is bound by residues Thr571, 586-587, Gly617, 796-800, and 973-977; these read SC, NLCTE, and PTAAS. Cys587 and Cys813 form a disulfide bridge. The active-site Proton acceptor is the Asn796. Catalysis depends on Cys798, which acts as the Cysteine radical intermediate. Residue Glu800 is the Proton acceptor of the active site.

Belongs to the ribonucleoside diphosphate reductase large chain family. As to quaternary structure, heterotetramer composed of a homodimer of the large subunit (R1) and a homodimer of the small subunit (R2). Larger multisubunit protein complex are also active, composed of (R1)n(R2)n. May self-assemble (via RIP homotypic interaction motif/RHIM) into homomeric fibrillar amyloid structures. Interacts (via RHIM) with human RIPK1 (via RHIM). Interacts (via RHIM) with human RIPK3 (via RHIM). May interact (via RHIM) with human ZBP1 (via RHIM). Interacts (via C-terminus) with host CASP8.

The protein localises to the host cell membrane. The protein resides in the host endosome membrane. The enzyme catalyses a 2'-deoxyribonucleoside 5'-diphosphate + [thioredoxin]-disulfide + H2O = a ribonucleoside 5'-diphosphate + [thioredoxin]-dithiol. In terms of biological role, ribonucleoside-diphosphate reductase holoenzyme that provides the precursors necessary for viral DNA synthesis. Allows virus growth in non-dividing cells, as well as reactivation from latency in infected hosts. Catalyzes the biosynthesis of deoxyribonucleotides from the corresponding ribonucleotides. The N-terminal region confers antiapoptotic activity in differentiated cells such as neurons and is important for viral reactivation to increase neural survivability. Prevents host necroptosis by targeting host RIPK1 and RIPK3, thereby hampering the formation of necroptotic RIPK1-RIPK3 complexes. May form hetero-amyloid structures with host proteins RIPK3 or ZBP1, thereby preventing RIPK3- and ZBP1-mediated necroptosis. In addition, inhibits extrinsic apoptosis by targeting host CASP8. This chain is Ribonucleoside-diphosphate reductase large subunit, found in Homo sapiens (Human).